Here is a 155-residue protein sequence, read N- to C-terminus: Endoribonuclease YbeY (155 aa).

Zn(2+)-binding residues include His114, His118, and His124.

This sequence belongs to the endoribonuclease YbeY family. The cofactor is Zn(2+).

The protein localises to the cytoplasm. In terms of biological role, single strand-specific metallo-endoribonuclease involved in late-stage 70S ribosome quality control and in maturation of the 3' terminus of the 16S rRNA. The sequence is that of Endoribonuclease YbeY from Escherichia coli O17:K52:H18 (strain UMN026 / ExPEC).